A 311-amino-acid chain; its full sequence is Taste receptor type 2 member 40 (311 aa).

Topologically, residues 1–9 (MSSLFSSFC) are extracellular. The chain crosses the membrane as a helical span at residues 10 to 30 (LVIAIFESVVGLLGNGTIVAV). At 31–55 (SSTSCIRSKILSSYDVIVIFLSLSR) the chain is on the cytoplasmic side. Residues 56 to 76 (FFLQLWMILDFLLIFFCQPSY) traverse the membrane as a helical segment. Residues 77–87 (YEENLFVTFKT) are Extracellular-facing. Residues 88–108 (VFIFLNSYSFWFAAWLSVFYC) form a helical membrane-spanning segment. Over 109-128 (VKVASFTQSFLSWLKQRIAS) the chain is Cytoplasmic. A helical transmembrane segment spans residues 129–149 (LIPWMLITSSLFSFATSLPFF). Residues 150–178 (WDSYNAHSNFTTPLTMTNSSKRITTRKTN) are Extracellular-facing. Residues 179–199 (LIFLILLCNVGIALPSIMLVF) traverse the membrane as a helical segment. At 200–235 (SSILLIRSLWRHTRQMQNNATGFRDPSLEALIGAIK) the chain is on the cytoplasmic side. The chain crosses the membrane as a helical span at residues 236–256 (TVFSFLLLYITNFIALILILS). Residues 257 to 266 (DTFVPLSTEE) are Extracellular-facing. The chain crosses the membrane as a helical span at residues 267-287 (AICVVVVAACPAGQSMVLIWS). Topologically, residues 288–311 (NPRFRELLSSILHYVNSCVRARCS) are cytoplasmic.

The protein belongs to the G-protein coupled receptor T2R family. As to expression, expressed in the oral cavity, as well as in the gastrointestinal tract, including in the upper palate, tongue, proventriculus, ventriculus, duodenum, jejunum, ileum, cecum and colon.

It is found in the cell membrane. Its function is as follows. Bitter taste receptor. Binds quinine, dextromethorphan, diphenhydramine, diphenidol, chlorpheniramine, diphenidol, chloramphenicol, chloroquine and coumarin, this latter being a weak agonist, as well as epiquinidine, ethylhydrocupreine and quinidine. The chain is Taste receptor type 2 member 40 (TAS2R40) from Gallus gallus (Chicken).